The primary structure comprises 212 residues: Deoxyribose-phosphate aldolase (212 aa).

The active-site Proton donor/acceptor is the D89. K151 functions as the Schiff-base intermediate with acetaldehyde in the catalytic mechanism. The active-site Proton donor/acceptor is the K180.

Belongs to the DeoC/FbaB aldolase family. DeoC type 1 subfamily.

The protein resides in the cytoplasm. The enzyme catalyses 2-deoxy-D-ribose 5-phosphate = D-glyceraldehyde 3-phosphate + acetaldehyde. Its pathway is carbohydrate degradation; 2-deoxy-D-ribose 1-phosphate degradation; D-glyceraldehyde 3-phosphate and acetaldehyde from 2-deoxy-alpha-D-ribose 1-phosphate: step 2/2. Functionally, catalyzes a reversible aldol reaction between acetaldehyde and D-glyceraldehyde 3-phosphate to generate 2-deoxy-D-ribose 5-phosphate. This chain is Deoxyribose-phosphate aldolase, found in Clostridium botulinum (strain Okra / Type B1).